A 277-amino-acid chain; its full sequence is Hematopoietically-expressed homeobox protein HHEX (277 aa).

Disordered stretches follow at residues 47-69 (AAPA…NSSF) and 199-277 (WRRL…SATR). Pro residues predominate over residues 52-63 (HSLPAPPPPTLP). The segment at residues 144 to 203 (RKGGQVRFSNEQTIELEKKFETQKYLSPPERKRLAKLLQLSERQVKTWFQNRRAKWRRLK) is a DNA-binding region (homeobox). Basic and acidic residues predominate over residues 210 to 226 (TKKEEAEGTGDHGDPRS). Residues 250 to 266 (EDPESDVSDDSDQEVDI) are compositionally biased toward acidic residues.

In all hematopoietic tissues except peripheral blood erythrocytes and in the liver and lung.

It localises to the nucleus. Functionally, recognizes the DNA sequence 5'-ATTAA-3'. Transcriptional repressor. May play a role in hematopoietic differentiation. The polypeptide is Hematopoietically-expressed homeobox protein HHEX (HHEX) (Gallus gallus (Chicken)).